The chain runs to 100 residues: Small ribosomal subunit protein uS14 (100 aa).

Belongs to the universal ribosomal protein uS14 family. As to quaternary structure, part of the 30S ribosomal subunit. Contacts proteins S3 and S10.

Its function is as follows. Binds 16S rRNA, required for the assembly of 30S particles and may also be responsible for determining the conformation of the 16S rRNA at the A site. The protein is Small ribosomal subunit protein uS14 of Prochlorococcus marinus (strain MIT 9215).